The chain runs to 481 residues: Amino acid permease 6 (481 aa).

Topologically, residues 1–36 (MEKKKSMFVEQSFPEHEIGDTNKNFDEDGRDKRTGT) are cytoplasmic. The next 2 membrane-spanning stretches (helical) occupy residues 37 to 57 (WMTG…LSLA) and 58 to 78 (WAIA…FSFI). At 79–125 (TYFTSTMLADCYRSPDPVTGKRNYTYMEVVRSYLGGRKVQLCGLAQY) the chain is on the cytoplasmic side. A helical transmembrane segment spans residues 126 to 146 (GNLIGITIGYTITASISMVAV). Residues 147-167 (KRSNCFHKNGHNVKCATSNTP) are Extracellular-facing. The helical transmembrane segment at 168–188 (FMIIFAIIQIILSQIPNFHNL) threads the bilayer. The Cytoplasmic segment spans residues 189–190 (SW). A helical transmembrane segment spans residues 191 to 211 (LSILAAVMSFCYASIGVGLSI). The Extracellular portion of the chain corresponds to 212 to 242 (AKAAGGGEHVRTTLTGVTVGIDVSGAEKIWR). Residues 243–263 (TFQAIGDIAFAYAYSTVLIEI) form a helical membrane-spanning segment. Topologically, residues 264-283 (QDTLKAGPPSENKAMKRASL) are cytoplasmic. A helical membrane pass occupies residues 284 to 304 (VGVSTTTFFYMLCGCVGYAAF). Residues 305–321 (GNDAPGNFLTGFGFYEP) lie on the Extracellular side of the membrane. Residues 322 to 342 (FWLIDFANVCIAVHLIGAYQV) form a helical membrane-spanning segment. Over 343 to 385 (FCQPIFQFVESQSAKRWPDNKFITGEYKIHVPCCGDFSINFLR) the chain is Cytoplasmic. Residues 386–405 (LVWRTSYVVVTAVVAMIFPF) traverse the membrane as a helical segment. The Extracellular portion of the chain corresponds to 406-408 (FND). Residues 409–427 (FLGLIGAASFWPLTVYFPI) form a helical membrane-spanning segment. Topologically, residues 428–447 (EMHIAQKKIPKFSFTWTWLK) are cytoplasmic. Residues 448–468 (ILSWTCFIVSLVAAAGSVQGL) traverse the membrane as a helical segment. At 469–481 (IQSLKDFKPFQAP) the chain is on the extracellular side.

The protein belongs to the amino acid/polyamine transporter 2 family. Amino acid/auxin permease (AAAP) (TC 2.A.18.2) subfamily. In terms of tissue distribution, expressed in roots and leaves, and at lower levels in stems and flowers. Found in the xylem parenchyma.

It localises to the cell membrane. Amino acid-proton symporter. Stereospecific transporter with a broad specificity for tryptophan, proline, and neutral and acidic amino acids. Has an affinity for aspartate in a physiological range. Involved in the uptake of amino acids diffusing out of the xylem tracheids into the xylem parenchyma. In Arabidopsis thaliana (Mouse-ear cress), this protein is Amino acid permease 6 (AAP6).